Consider the following 198-residue polypeptide: Translation initiation factor IF-3 (198 aa).

The interval Ser-168–Glu-198 is disordered. Basic and acidic residues predominate over residues Lys-178–Glu-198.

The protein belongs to the IF-3 family. In terms of assembly, monomer.

Its subcellular location is the cytoplasm. In terms of biological role, IF-3 binds to the 30S ribosomal subunit and shifts the equilibrium between 70S ribosomes and their 50S and 30S subunits in favor of the free subunits, thus enhancing the availability of 30S subunits on which protein synthesis initiation begins. The protein is Translation initiation factor IF-3 of Phocaeicola vulgatus (strain ATCC 8482 / DSM 1447 / JCM 5826 / CCUG 4940 / NBRC 14291 / NCTC 11154) (Bacteroides vulgatus).